The primary structure comprises 266 residues: Protein-ADP-ribose hydrolase (266 aa).

Residues 74–265 (TDLKDLKPIK…LYKEALNRDA (192 aa)) form the Macro domain. ADP-D-ribose-binding residues include D93, I94, and N107. Zn(2+) is bound by residues C113, H118, and C120. ADP-D-ribose is bound by residues C120, I121, D122, S212, T213, G214, and F216.

The protein belongs to the MacroD-type family. Zn-Macro subfamily. In terms of assembly, monomer. Directly interacts with the lipoylated form of GcvH-L. Zn(2+) serves as cofactor.

The catalysed reaction is 4-O-(ADP-D-ribosyl)-L-aspartyl-[protein] + H2O = L-aspartyl-[protein] + ADP-D-ribose + H(+). Functionally, ADP-ribosylhydrolase that specifically reverses the SirTM-mediated mono-ADP-ribosylation at an asparatate residue of GcvH-L (SAV0324), by releasing ADP-ribose from the target protein. May play a role in the regulation of the response to host-induced oxidative stress. In Staphylococcus aureus (strain Mu50 / ATCC 700699), this protein is Protein-ADP-ribose hydrolase.